Consider the following 421-residue polypeptide: MKLTQEIKFSLQKTQKVLSIQMQVHHINDFTKLFKKCIFPGSRWQLEQENIKSIATTFEEPLPENLQEFIKENNCQILEKEVTVGYDNMTYNEVLQQLLPKNVQAPQGYEIIGKIAHFNLSLEQLPYKYLIGQVLLDKNKHLQTVCNKLEKLHNVYRTPQLELLAGNNSYDAIVPEGGVRLFLNFEKVYWCTRLYSERERVIKYIKELSNGKNIKVLDLFCGIGPFSLRIAKDLNAQCLANDLNPECYYYLLKNIIENKVQNQVTPLNMDAREVVLKIYNKEIDFDFNHVYMNLPVLAINFLDVFKGFTQRTGKVDLPYIHVYGFAKGKDDQELIEQFSQRIIKGLPGFDKSQILRFHILKNVTKMKKMCCLSFQLDKKSAESEFGLVEQEDGNNSDFEDDEKMEQHELVEDVVNKKVKID.

S-adenosyl-L-methionine is bound by residues Arg-198, 242 to 243, 270 to 271, and Asn-293; these read DL and DA.

The protein belongs to the class I-like SAM-binding methyltransferase superfamily. TRM5/TYW2 family. Monomer.

It is found in the mitochondrion matrix. It localises to the nucleus. The protein localises to the cytoplasm. It catalyses the reaction guanosine(37) in tRNA + S-adenosyl-L-methionine = N(1)-methylguanosine(37) in tRNA + S-adenosyl-L-homocysteine + H(+). Specifically methylates the N1 position of guanosine-37 in various cytoplasmic and mitochondrial tRNAs. Methylation is not dependent on the nature of the nucleoside 5' of the target nucleoside. This is the first step in the biosynthesis of wybutosine (yW), a modified base adjacent to the anticodon of tRNAs and required for accurate decoding. The protein is tRNA (guanine(37)-N(1))-methyltransferase of Paramecium tetraurelia.